The following is an 83-amino-acid chain: RNA-binding protein Hfq (83 aa).

The region spanning 9–68 (DPYLNILRKERIPVSIFLVNGIKLQGQIESFDQFVILLRNTVSQMVYKHAISTVVPSRNV) is the Sm domain.

This sequence belongs to the Hfq family. In terms of assembly, homohexamer.

Functionally, RNA chaperone that binds small regulatory RNA (sRNAs) and mRNAs to facilitate mRNA translational regulation in response to envelope stress, environmental stress and changes in metabolite concentrations. Also binds with high specificity to tRNAs. The polypeptide is RNA-binding protein Hfq (Chromohalobacter salexigens (strain ATCC BAA-138 / DSM 3043 / CIP 106854 / NCIMB 13768 / 1H11)).